Reading from the N-terminus, the 451-residue chain is uncharacterized protein (451 aa).

A TRAM domain is found at 2 to 60; the sequence is NLKVKQKIPLKIKRMGINGEGIGFYQKTLVFVPGALKGEDIYCQITSIRRNFVEAKLLK. [4Fe-4S] cluster is bound by residues Cys73, Cys79, Cys82, and Cys162. Residues Gln283, Tyr312, Asp333, and Asp381 each contribute to the S-adenosyl-L-methionine site. The active-site Nucleophile is the Cys408.

This sequence belongs to the class I-like SAM-binding methyltransferase superfamily. RNA M5U methyltransferase family.

This is an uncharacterized protein from Streptococcus pneumoniae serotype 4 (strain ATCC BAA-334 / TIGR4).